We begin with the raw amino-acid sequence, 89 residues long: Co-chaperonin GroES (89 aa).

This sequence belongs to the GroES chaperonin family. As to quaternary structure, heptamer of 7 subunits arranged in a ring. Interacts with the chaperonin GroEL.

It is found in the cytoplasm. In terms of biological role, together with the chaperonin GroEL, plays an essential role in assisting protein folding. The GroEL-GroES system forms a nano-cage that allows encapsulation of the non-native substrate proteins and provides a physical environment optimized to promote and accelerate protein folding. GroES binds to the apical surface of the GroEL ring, thereby capping the opening of the GroEL channel. The protein is Co-chaperonin GroES of Porphyromonas gingivalis (strain ATCC 33277 / DSM 20709 / CIP 103683 / JCM 12257 / NCTC 11834 / 2561).